We begin with the raw amino-acid sequence, 106 residues long: Putative double-stranded DNA mimic protein PM0536 (106 aa).

Belongs to the putative dsDNA mimic protein family.

Functionally, may act as a double-stranded DNA (dsDNA) mimic. Probably regulates the activity of a dsDNA-binding protein. The protein is Putative double-stranded DNA mimic protein PM0536 of Pasteurella multocida (strain Pm70).